Consider the following 213-residue polypeptide: MVEPLKLALSKGRIFQEILPLLAIAGIYPRDDPKTSRKLVLDTNQADLKLVIIRAADVPTYVEYGAADFGVAGKDVLLEHPGNGLYEPLDLRIACCRMMVAGEPEVTPRSGRLRIATKYVHSTRRFYAERGEQVEVIKLYGSMELAPLVGLADRIVDLVDTGNTLRANGLAPLEHITDISSRLVVNKASMKMRHQRIKKFICLMAEAVEKQHG.

It belongs to the ATP phosphoribosyltransferase family. Short subfamily. In terms of assembly, heteromultimer composed of HisG and HisZ subunits.

It localises to the cytoplasm. It catalyses the reaction 1-(5-phospho-beta-D-ribosyl)-ATP + diphosphate = 5-phospho-alpha-D-ribose 1-diphosphate + ATP. Its pathway is amino-acid biosynthesis; L-histidine biosynthesis; L-histidine from 5-phospho-alpha-D-ribose 1-diphosphate: step 1/9. Its function is as follows. Catalyzes the condensation of ATP and 5-phosphoribose 1-diphosphate to form N'-(5'-phosphoribosyl)-ATP (PR-ATP). Has a crucial role in the pathway because the rate of histidine biosynthesis seems to be controlled primarily by regulation of HisG enzymatic activity. This is ATP phosphoribosyltransferase from Nitrosococcus oceani (strain ATCC 19707 / BCRC 17464 / JCM 30415 / NCIMB 11848 / C-107).